Consider the following 427-residue polypeptide: 3-phosphoshikimate 1-carboxyvinyltransferase (427 aa).

Residues lysine 22, serine 23, and arginine 27 each coordinate 3-phosphoshikimate. Lysine 22 is a phosphoenolpyruvate binding site. Residues glycine 93 and arginine 122 each contribute to the phosphoenolpyruvate site. Residues serine 167, glutamine 169, aspartate 315, and lysine 342 each contribute to the 3-phosphoshikimate site. Residue glutamine 169 participates in phosphoenolpyruvate binding. Aspartate 315 acts as the Proton acceptor in catalysis. Arginine 346 and arginine 387 together coordinate phosphoenolpyruvate.

Belongs to the EPSP synthase family. In terms of assembly, monomer.

Its subcellular location is the cytoplasm. It catalyses the reaction 3-phosphoshikimate + phosphoenolpyruvate = 5-O-(1-carboxyvinyl)-3-phosphoshikimate + phosphate. The protein operates within metabolic intermediate biosynthesis; chorismate biosynthesis; chorismate from D-erythrose 4-phosphate and phosphoenolpyruvate: step 6/7. Its function is as follows. Catalyzes the transfer of the enolpyruvyl moiety of phosphoenolpyruvate (PEP) to the 5-hydroxyl of shikimate-3-phosphate (S3P) to produce enolpyruvyl shikimate-3-phosphate and inorganic phosphate. The protein is 3-phosphoshikimate 1-carboxyvinyltransferase of Thermus thermophilus (strain ATCC 27634 / DSM 579 / HB8).